A 179-amino-acid chain; its full sequence is Bifunctional protein PyrR (179 aa).

Substrate is bound by residues 39–40, 101–109, Arg134, and Val158; these read RR and DDVLFTGRT. Residues 97–109 carry the PRPP-binding motif; sequence VILIDDVLFTGRT.

It belongs to the purine/pyrimidine phosphoribosyltransferase family. PyrR subfamily.

The enzyme catalyses UMP + diphosphate = 5-phospho-alpha-D-ribose 1-diphosphate + uracil. Functionally, regulates the transcription of the pyrimidine nucleotide (pyr) operon in response to exogenous pyrimidines. Its function is as follows. Also displays a weak uracil phosphoribosyltransferase activity which is not physiologically significant. This chain is Bifunctional protein PyrR, found in Haemophilus ducreyi (strain 35000HP / ATCC 700724).